We begin with the raw amino-acid sequence, 428 residues long: Gamma-glutamyl phosphate reductase (428 aa).

Belongs to the gamma-glutamyl phosphate reductase family.

The protein localises to the cytoplasm. It catalyses the reaction L-glutamate 5-semialdehyde + phosphate + NADP(+) = L-glutamyl 5-phosphate + NADPH + H(+). The protein operates within amino-acid biosynthesis; L-proline biosynthesis; L-glutamate 5-semialdehyde from L-glutamate: step 2/2. Its function is as follows. Catalyzes the NADPH-dependent reduction of L-glutamate 5-phosphate into L-glutamate 5-semialdehyde and phosphate. The product spontaneously undergoes cyclization to form 1-pyrroline-5-carboxylate. The protein is Gamma-glutamyl phosphate reductase of Mesorhizobium japonicum (strain LMG 29417 / CECT 9101 / MAFF 303099) (Mesorhizobium loti (strain MAFF 303099)).